Reading from the N-terminus, the 319-residue chain is Malate dehydrogenase (319 aa).

NAD(+) contacts are provided by residues 10 to 15 and D34; that span reads GAGNIG. The substrate site is built by R83 and R89. Residues N96 and 119–121 each bind NAD(+); that span reads ITN. Residues N121 and R152 each contribute to the substrate site. H176 serves as the catalytic Proton acceptor.

It belongs to the LDH/MDH superfamily. MDH type 3 family.

The enzyme catalyses (S)-malate + NAD(+) = oxaloacetate + NADH + H(+). In terms of biological role, catalyzes the reversible oxidation of malate to oxaloacetate. The sequence is that of Malate dehydrogenase from Francisella novicida.